The following is a 576-amino-acid chain: Vesicular glutamate transporter 1 (576 aa).

Topologically, residues 1–63 (MEFRKEEFKK…CTCFGLPRRY (63 aa)) are cytoplasmic. Residues 64 to 84 (IIAIMSGLGFCISFGIRCNLG) form a helical membrane-spanning segment. Residues 85-116 (VAIVSMVNNNTVYKGNKLVIEQAQFNWDPETV) lie on the Vesicular side of the membrane. Asn93 is a glycosylation site (N-linked (GlcNAc...) asparagine). Residues 117 to 137 (GMIHGSFFWGYIVTQIPGGYI) traverse the membrane as a helical segment. Over 138–140 (CQK) the chain is Cytoplasmic. The helical transmembrane segment at 141–161 (FAANRVFGFAIVATSTLNMLI) threads the bilayer. The Vesicular portion of the chain corresponds to 162 to 168 (PSAARVH). The helical transmembrane segment at 169–189 (FACVICVRILQGLVEGVTYPA) threads the bilayer. Topologically, residues 190–208 (CHGIWSKWAPPLERSRLAT) are cytoplasmic. A helical membrane pass occupies residues 209-229 (TAFCGSYAGAVVAMPLAGVLV). Residues 230–236 (QYSGWSS) are Vesicular-facing. The helical transmembrane segment at 237 to 257 (VFYVYGSFGITWYMFWILVSY) threads the bilayer. Residues 258-297 (ESPAQHPTISEEERKYIEESIGESTGFMNPMAKFKAPWRK) lie on the Cytoplasmic side of the membrane. The helical transmembrane segment at 298–320 (FFTSMPVYAIIVANFCRSWTFYL) threads the bilayer. Residues 321–341 (LLISQPAYFEEVFGFAISKVG) are Vesicular-facing. A helical membrane pass occupies residues 342 to 362 (LLSALPHLVMTIIVPIGGQIA). At 363–378 (DFLRTKRIMSTTNVRK) the chain is on the cytoplasmic side. The helical transmembrane segment at 379-399 (MMNCGGFGMEATLLLVVGYSH) threads the bilayer. Residues 400–401 (SR) lie on the Vesicular side of the membrane. Residues 402-422 (GVAISFLVLAVGFSGFAISGF) traverse the membrane as a helical segment. At 423 to 435 (NVNHLDIAPRYAS) the chain is on the cytoplasmic side. The chain crosses the membrane as a helical span at residues 436 to 456 (ILMGISNGVGTLSGMVCPLIV). Over 457–469 (GAMTKHKTREEWQ) the chain is Vesicular. A helical transmembrane segment spans residues 470–490 (YVFLIASLVHYGGVVFYGIFA). Residues 491–576 (SGEKQPWAEP…YGTVAERDLS (86 aa)) lie on the Cytoplasmic side of the membrane. The tract at residues 517–552 (ADESEEQTQAHGGYGSYGATQTTSQQNGGWATDWEK) is disordered. Residues 534-545 (GATQTTSQQNGG) are compositionally biased toward polar residues.

It belongs to the major facilitator superfamily. Sodium/anion cotransporter family. VGLUT subfamily.

The protein resides in the cytoplasmic vesicle. Its subcellular location is the secretory vesicle. It is found in the synaptic vesicle membrane. The protein localises to the cell membrane. It localises to the synapse. The protein resides in the synaptosome. It catalyses the reaction L-glutamate(out) = L-glutamate(in). It carries out the reaction chloride(in) = chloride(out). The enzyme catalyses 3 Na(+)(out) + phosphate(out) = 3 Na(+)(in) + phosphate(in). The catalysed reaction is phosphate(in) = phosphate(out). It catalyses the reaction K(+)(in) + H(+)(out) = K(+)(out) + H(+)(in). Its activity is regulated as follows. Chloride channel activity is allosterically activated by lumenal H(+) and Cl(-) leading to synaptic vesicles acidification. The L-glutamate transport activity is allosterically activated by lumenal H(+) and Cl(-). The allosteric activation by H(+) efficiently prevents non-vesicular efflux across the plasma membrane, thereby restricting L-glutamate transport activity to acidic membranes such as synaptic vesicles. Its function is as follows. Multifunctional transporter that transports L-glutamate as well as multiple ions such as chloride, proton, potassium, sodium and phosphate. At the synaptic vesicle membrane, mainly functions as an uniporter which transports preferentially L-glutamate but also phosphate from the cytoplasm into synaptic vesicles at presynaptic nerve terminals of excitatory neural cells. The L-glutamate or phosphate uniporter activity is electrogenic and is driven by the proton electrochemical gradient, mainly by the electrical gradient established by the vacuolar H(+)-ATPase across the synaptic vesicle membrane. In addition, functions as a chloride channel that allows a chloride permeation through the synaptic vesicle membrane that affects the proton electrochemical gradient and promotes synaptic vesicles acidification. Moreover, may function as a K(+)/H(+) antiport allowing to maintain the electrical gradient and to decrease chemical gradient and therefore sustain vesicular glutamate uptake. The vesicular K(+)/H(+) antiport activity is electroneutral. At the plasma membrane, following exocytosis, functions as a symporter of Na(+) and phosphate from the extracellular space to the cytoplasm allowing synaptic phosphate homeostasis regulation. The symporter activity is driven by an inside negative membrane potential and is electrogenic. Is necessary for synaptic signaling of visual-evoked responses from photoreceptors. The chain is Vesicular glutamate transporter 1 from Xenopus laevis (African clawed frog).